The sequence spans 313 residues: tRNA pseudouridine synthase B (313 aa).

D42 functions as the Nucleophile in the catalytic mechanism.

Belongs to the pseudouridine synthase TruB family. Type 1 subfamily.

The enzyme catalyses uridine(55) in tRNA = pseudouridine(55) in tRNA. Its function is as follows. Responsible for synthesis of pseudouridine from uracil-55 in the psi GC loop of transfer RNAs. The sequence is that of tRNA pseudouridine synthase B from Prochlorococcus marinus (strain SARG / CCMP1375 / SS120).